The sequence spans 490 residues: Betaine aldehyde dehydrogenase (490 aa).

Residues S26, I27, and D93 each contribute to the K(+) site. NAD(+) is bound at residue 150–152; the sequence is GAW. K162 (charge relay system) is an active-site residue. Position 176–179 (176–179) interacts with NAD(+); that stretch reads KPSE. V180 contacts K(+). 230-233 serves as a coordination point for NAD(+); that stretch reads GTVT. Position 246 (L246) interacts with K(+). E252 acts as the Proton acceptor in catalysis. NAD(+)-binding residues include G254, C286, and E387. Residue C286 is the Nucleophile of the active site. Residue C286 is modified to Cysteine sulfenic acid (-SOH). Residues K457 and G460 each coordinate K(+). E464 acts as the Charge relay system in catalysis.

It belongs to the aldehyde dehydrogenase family. Dimer of dimers. It depends on K(+) as a cofactor.

It catalyses the reaction betaine aldehyde + NAD(+) + H2O = glycine betaine + NADH + 2 H(+). Its pathway is amine and polyamine biosynthesis; betaine biosynthesis via choline pathway; betaine from betaine aldehyde: step 1/1. Its function is as follows. Involved in the biosynthesis of the osmoprotectant glycine betaine. Catalyzes the irreversible oxidation of betaine aldehyde to the corresponding acid. This chain is Betaine aldehyde dehydrogenase, found in Ectopseudomonas mendocina (strain ymp) (Pseudomonas mendocina).